The following is a 255-amino-acid chain: tRNA (guanine-N(7)-)-methyltransferase (255 aa).

Positions 1-30 are disordered; sequence MMHDDPNEAGLPPDDAALPDEAADGADEVN. Positions 17–27 are enriched in acidic residues; sequence ALPDEAADGAD. Glu-86, Glu-111, Asp-138, and Asp-161 together coordinate S-adenosyl-L-methionine. Asp-161 is an active-site residue. Residues Lys-165, Asp-197, and 232-235 contribute to the substrate site; that span reads TKFE.

The protein belongs to the class I-like SAM-binding methyltransferase superfamily. TrmB family.

It carries out the reaction guanosine(46) in tRNA + S-adenosyl-L-methionine = N(7)-methylguanosine(46) in tRNA + S-adenosyl-L-homocysteine. The protein operates within tRNA modification; N(7)-methylguanine-tRNA biosynthesis. In terms of biological role, catalyzes the formation of N(7)-methylguanine at position 46 (m7G46) in tRNA. This Burkholderia vietnamiensis (strain G4 / LMG 22486) (Burkholderia cepacia (strain R1808)) protein is tRNA (guanine-N(7)-)-methyltransferase.